A 113-amino-acid polypeptide reads, in one-letter code: Putative pterin-4-alpha-carbinolamine dehydratase (113 aa).

This sequence belongs to the pterin-4-alpha-carbinolamine dehydratase family.

It catalyses the reaction (4aS,6R)-4a-hydroxy-L-erythro-5,6,7,8-tetrahydrobiopterin = (6R)-L-erythro-6,7-dihydrobiopterin + H2O. The polypeptide is Putative pterin-4-alpha-carbinolamine dehydratase (Legionella pneumophila (strain Lens)).